A 219-amino-acid chain; its full sequence is Thiopurine S-methyltransferase (219 aa).

Residues Trp10, Leu45, Glu66, and Arg123 each contribute to the S-adenosyl-L-methionine site.

Belongs to the class I-like SAM-binding methyltransferase superfamily. TPMT family.

It is found in the cytoplasm. It catalyses the reaction S-adenosyl-L-methionine + a thiopurine = S-adenosyl-L-homocysteine + a thiopurine S-methylether.. The sequence is that of Thiopurine S-methyltransferase from Shewanella pealeana (strain ATCC 700345 / ANG-SQ1).